The primary structure comprises 432 residues: RNA exonuclease 4 (432 aa).

A compositionally biased stretch (basic residues) spans 42–54 (ARKKAKKKFRKSK). Residues 42 to 177 (ARKKAKKKFR…AKKRTYSDIS (136 aa)) form a disordered region. Over residues 121–137 (KASDKSKGDKQRTEKAK) the composition is skewed to basic and acidic residues. S123 is subject to Phosphoserine. Residue K127 forms a Glycyl lysine isopeptide (Lys-Gly) (interchain with G-Cter in SUMO2) linkage. In terms of domain architecture, Exonuclease spans 230-381 (KRLGQKKRTI…PSLKRLSEKI (152 aa)).

It belongs to the REXO4 family. As to quaternary structure, can bind ESR1 and ESR2. This interaction is abrogated by estrogen and augmented by tamoxifen treatment.

It is found in the nucleus. It localises to the nucleolus. Its function is as follows. May function as an exonuclease. The protein is RNA exonuclease 4 (Rexo4) of Mus musculus (Mouse).